A 1514-amino-acid chain; its full sequence is ABC transporter C family member 3 (1514 aa).

The next 10 membrane-spanning stretches (helical) occupy residues 35–55 (PLFL…VLFF), 83–103 (ALFC…LSGF), 116–136 (LVSS…SICL), 153–173 (LWLV…FVMY), 183–203 (LLVF…VAVL), 325–345 (ILVT…GPAL), 364–386 (YVLV…HWFF), 439–459 (WYMH…WILY), 463–483 (GLAS…NFPF), and 551–571 (FVFW…CILL). The region spanning 325–606 (ILVTAFFAFI…LPDTISMIVQ (282 aa)) is the ABC transmembrane type-1 1 domain. Residues 640 to 863 (VEVINSTLSW…GTDFMELIGA (224 aa)) form the ABC transporter 1 domain. ATP is bound at residue 675-682 (GTVGSGKS). Transmembrane regions (helical) follow at residues 940 to 960 (YITL…QVLF), 987 to 1007 (LSTL…CILL), 1077 to 1097 (IGII…FIPV), 1181 to 1201 (LSSL…TGVI), and 1205 to 1225 (LAGL…WLIW). One can recognise an ABC transmembrane type-1 2 domain in the interval 950 to 1232 (VPFILLGQVL…LIWTLCNLEN (283 aa)). The 233-residue stretch at 1271 to 1503 (IRDLQVRYAP…KSSSFSKLVA (233 aa)) folds into the ABC transporter 2 domain. Residue 1303–1310 (GRTGSGKS) coordinates ATP.

This sequence belongs to the ABC transporter superfamily. ABCC family. Conjugate transporter (TC 3.A.1.208) subfamily. As to expression, ubiquitous.

The protein resides in the membrane. The enzyme catalyses ATP + H2O + xenobioticSide 1 = ADP + phosphate + xenobioticSide 2.. Glutathione-conjugate transport is inhibited by decyl-glutathione and, to a lower extent, by GS-GS, but not by GSH. All transports are inhibited by vanadate. Functionally, pump for glutathione S-conjugates. Mediates the transport of glutathione conjugates such as chlorodinitrobenzene-GS (DNB-GS), and of chlorophyll catabolites such as Bn-NCC-1. Also transports heavy metals such as cadmium (Cd). The protein is ABC transporter C family member 3 (ABCC3) of Arabidopsis thaliana (Mouse-ear cress).